The chain runs to 500 residues: Glycerol kinase (500 aa).

Threonine 13 is a binding site for ADP. Residues threonine 13, threonine 14, and serine 15 each contribute to the ATP site. Threonine 13 provides a ligand contact to sn-glycerol 3-phosphate. Arginine 17 is a binding site for ADP. Positions 83, 84, and 135 each coordinate sn-glycerol 3-phosphate. 3 residues coordinate glycerol: arginine 83, glutamate 84, and tyrosine 135. Residue histidine 231 is modified to Phosphohistidine; by HPr. Aspartate 245 contributes to the sn-glycerol 3-phosphate binding site. Positions 245 and 246 each coordinate glycerol. 2 residues coordinate ADP: threonine 267 and glycine 310. ATP-binding residues include threonine 267, glycine 310, glutamine 314, and glycine 411. Positions 411 and 415 each coordinate ADP.

It belongs to the FGGY kinase family. Homotetramer and homodimer (in equilibrium). The phosphoenolpyruvate-dependent sugar phosphotransferase system (PTS), including enzyme I, and histidine-containing protein (HPr) are required for the phosphorylation, which leads to the activation of the enzyme.

The catalysed reaction is glycerol + ATP = sn-glycerol 3-phosphate + ADP + H(+). It functions in the pathway polyol metabolism; glycerol degradation via glycerol kinase pathway; sn-glycerol 3-phosphate from glycerol: step 1/1. With respect to regulation, activated by phosphorylation and inhibited by fructose 1,6-bisphosphate (FBP). Key enzyme in the regulation of glycerol uptake and metabolism. Catalyzes the phosphorylation of glycerol to yield sn-glycerol 3-phosphate. This chain is Glycerol kinase, found in Oceanobacillus iheyensis (strain DSM 14371 / CIP 107618 / JCM 11309 / KCTC 3954 / HTE831).